The chain runs to 38 residues: Cytochrome b6-f complex subunit 5 (38 aa).

The chain crosses the membrane as a helical span at residues leucine 5–alanine 25.

The protein belongs to the PetG family. The 4 large subunits of the cytochrome b6-f complex are cytochrome b6, subunit IV (17 kDa polypeptide, PetD), cytochrome f and the Rieske protein, while the 4 small subunits are PetG, PetL, PetM and PetN. The complex functions as a dimer.

It localises to the plastid. Its subcellular location is the chloroplast thylakoid membrane. Functionally, component of the cytochrome b6-f complex, which mediates electron transfer between photosystem II (PSII) and photosystem I (PSI), cyclic electron flow around PSI, and state transitions. PetG is required for either the stability or assembly of the cytochrome b6-f complex. This chain is Cytochrome b6-f complex subunit 5, found in Huperzia lucidula (Shining clubmoss).